The chain runs to 180 residues: uncharacterized protein (180 aa).

A coiled-coil region spans residues 114–147 (EDIYEDIVDVRLENQSLEEQLEDFKECSRALKKY).

It belongs to the mimivirus L74/L77/R857 family.

This is an uncharacterized protein from Acanthamoeba polyphaga mimivirus (APMV).